The chain runs to 332 residues: Heat-inducible transcription repressor HrcA (332 aa).

The protein belongs to the HrcA family.

Negative regulator of class I heat shock genes (grpE-dnaK-dnaJ and groELS operons). Prevents heat-shock induction of these operons. The chain is Heat-inducible transcription repressor HrcA from Mycoplasma mobile (strain ATCC 43663 / 163K / NCTC 11711) (Mesomycoplasma mobile).